The following is a 114-amino-acid chain: Iron-sulfur cluster insertion protein ErpA (114 aa).

3 residues coordinate iron-sulfur cluster: Cys-42, Cys-106, and Cys-108.

Belongs to the HesB/IscA family. Homodimer. Requires iron-sulfur cluster as cofactor.

Functionally, required for insertion of 4Fe-4S clusters for at least IspG. This is Iron-sulfur cluster insertion protein ErpA from Haemophilus influenzae (strain PittEE).